The sequence spans 550 residues: Arginine--tRNA ligase (550 aa).

The 'HIGH' region motif lies at 130-140; sequence ANPTGPIHIGG.

Belongs to the class-I aminoacyl-tRNA synthetase family. Monomer.

Its subcellular location is the cytoplasm. It catalyses the reaction tRNA(Arg) + L-arginine + ATP = L-arginyl-tRNA(Arg) + AMP + diphosphate. This Mycolicibacterium paratuberculosis (strain ATCC BAA-968 / K-10) (Mycobacterium paratuberculosis) protein is Arginine--tRNA ligase.